We begin with the raw amino-acid sequence, 308 residues long: Putative integrase/recombinase y4qK (308 aa).

The Core-binding (CB) domain occupies 15 to 97; that stretch reads LVMTPLRQRM…ALRFFFSVTL (83 aa). The Tyr recombinase domain occupies 115-288; sequence KLPIILSPDE…ATNKVCATSS (174 aa). Active-site residues include Arg-150, Lys-175, His-240, Arg-243, and His-266. The O-(3'-phospho-DNA)-tyrosine intermediate role is filled by Tyr-275.

The protein belongs to the 'phage' integrase family.

In terms of biological role, may function as an integrase. The polypeptide is Putative integrase/recombinase y4qK (Sinorhizobium fredii (strain NBRC 101917 / NGR234)).